The sequence spans 352 residues: Diacylglycerol acyltransferase/mycolyltransferase Ag85C (352 aa).

The first 37 residues, 1–37 (MSFIEKVRKLRGAAATMPRRLAIAAVGASLLSGVAVA), serve as a signal peptide directing secretion. A substrate-binding site is contributed by 86–87 (LR). The interval 102–112 (FEEFYQSGLSV) is fibronectin-binding. The substrate site is built by Ser170 and Asn198. Ser170 acts as the Nucleophile in catalysis. Residue Glu274 is part of the active site. Substrate is bound by residues 276-279 (LTLR) and 306-308 (HSW). His306 is an active-site residue. A disordered region spans residues 332–352 (TAAPAQPAQPAQPAQPAQPAT). The segment covering 333 to 352 (AAPAQPAQPAQPAQPAQPAT) has biased composition (low complexity).

The protein belongs to the mycobacterial A85 antigen family. As to quaternary structure, homodimer.

It localises to the secreted. It catalyses the reaction an acyl-CoA + a 1,2-diacyl-sn-glycerol = a triacyl-sn-glycerol + CoA. It carries out the reaction 2 alpha,alpha'-trehalose 6-mycolate = alpha,alpha'-trehalose 6,6'-bismycolate + alpha,alpha-trehalose. Its function is as follows. The antigen 85 proteins (FbpA, FbpB, FbpC) are responsible for the high affinity of mycobacteria to fibronectin, a large adhesive glycoprotein, which facilitates the attachment of M.tuberculosis to murine alveolar macrophages (AMs). They also help to maintain the integrity of the cell wall by catalyzing the transfer of mycolic acids to cell wall arabinogalactan and through the synthesis of alpha,alpha-trehalose dimycolate (TDM, cord factor). They catalyze the transfer of a mycoloyl residue from one molecule of alpha,alpha-trehalose monomycolate (TMM) to another TMM, leading to the formation of TDM. This Mycobacterium avium protein is Diacylglycerol acyltransferase/mycolyltransferase Ag85C (fbpC).